A 159-amino-acid chain; its full sequence is MPKFYCDYCDTYLTHDSPSVRKTHCSGRKHKENVKDYYQKWMEEQAQSLIDKTTAAFQQGKIPPAPFSAPPPAGAMIPPPPSLPGPPRPGMMPAPHMGGPPMMPMMGPPPPGMMPVGPAPGMRPPMGGHMPMMPGPPMMRPPARPMMVPTRPGMTRPDR.

The Matrin-type zinc finger occupies 4–36 (FYCDYCDTYLTHDSPSVRKTHCSGRKHKENVKD). Tyr8 bears the Phosphotyrosine mark. Ser17 carries the phosphoserine modification. The residue at position 52 (Lys52) is an N6-acetyllysine. Residues 62–96 (IPPAPFSAPPPAGAMIPPPPSLPGPPRPGMMPAPH) form a disordered region. The span at 63–92 (PPAPFSAPPPAGAMIPPPPSLPGPPRPGMM) shows a compositional bias: pro residues.

The protein belongs to the U1 small nuclear ribonucleoprotein C family. As to quaternary structure, component of the U1 snRNP. The U1 snRNP is composed of the U1 snRNA and the 7 core Sm proteins SNRPB, SNRPD1, SNRPD2, SNRPD3, SNRPE, SNRPF and SNRPG that assemble in a heptameric protein ring on the Sm site of the small nuclear RNA to form the core snRNP, and at least 3 U1 snRNP-specific proteins SNRNP70/U1-70K, SNRPA/U1-A and SNRPC/U1-C. SNRPC/U1-C interacts with U1 snRNA and the 5' splice-site region of the pre-mRNA. Interacts (via N-terminus) with TIA1 (via C-terminus); thereby promoting spliceosomal U1 snRNP recruitment to 5' splice sites.

The protein resides in the nucleus. Component of the spliceosomal U1 snRNP, which is essential for recognition of the pre-mRNA 5' splice-site and the subsequent assembly of the spliceosome. SNRPC/U1-C is directly involved in initial 5' splice-site recognition for both constitutive and regulated alternative splicing. The interaction with the 5' splice-site seems to precede base-pairing between the pre-mRNA and the U1 snRNA. Stimulates commitment or early (E) complex formation by stabilizing the base pairing of the 5' end of the U1 snRNA and the 5' splice-site region. In Rattus norvegicus (Rat), this protein is U1 small nuclear ribonucleoprotein C.